Consider the following 294-residue polypeptide: MFRRYLSVTKPGIIMGNLISVAGGFLLASRGDINPWLMVATLIGLSLVVASGCAINNVIDRDIDIAMARTRTRVTVTGEMSAMAALCHGVVLGIIGFGLLIAYTTPAAVFFAAFGYFIYVGVYSLYMKRNSVYGTFIGSLSGAVPPVVGYCAVSGEFDMGALILLVMFSLWQMPHSYAIAIFRFKDYQAAGIPVLPVAQGIDKAKRHIVLYIAIYALVVMLLPISGYTGAAFMAVACITSFWWLLMALRGYRRNIDISGWARQVFAFSIINITALSIAMAVDYQSIAPQLLALN.

The next 9 membrane-spanning stretches (helical) occupy residues 8–28 (VTKP…FLLA), 35–55 (PWLM…GCAI), 82–102 (AMAA…LLIA), 107–127 (AAVF…SLYM), 132–152 (VYGT…GYCA), 162–182 (LILL…IAIF), 208–228 (IVLY…SGYT), 229–249 (GAAF…MALR), and 263–283 (QVFA…AVDY).

The protein belongs to the UbiA prenyltransferase family. Protoheme IX farnesyltransferase subfamily.

The protein localises to the cell inner membrane. It carries out the reaction heme b + (2E,6E)-farnesyl diphosphate + H2O = Fe(II)-heme o + diphosphate. It participates in porphyrin-containing compound metabolism; heme O biosynthesis; heme O from protoheme: step 1/1. Its function is as follows. Converts heme B (protoheme IX) to heme O by substitution of the vinyl group on carbon 2 of heme B porphyrin ring with a hydroxyethyl farnesyl side group. This chain is Protoheme IX farnesyltransferase 1, found in Pseudoalteromonas translucida (strain TAC 125).